The primary structure comprises 488 residues: UDP-N-acetylmuramate--L-alanine ligase (488 aa).

127-133 (GTHGKTT) serves as a coordination point for ATP.

Belongs to the MurCDEF family.

It is found in the cytoplasm. It carries out the reaction UDP-N-acetyl-alpha-D-muramate + L-alanine + ATP = UDP-N-acetyl-alpha-D-muramoyl-L-alanine + ADP + phosphate + H(+). Its pathway is cell wall biogenesis; peptidoglycan biosynthesis. Functionally, cell wall formation. The chain is UDP-N-acetylmuramate--L-alanine ligase from Shewanella sp. (strain ANA-3).